Consider the following 70-residue polypeptide: Phycobilisome 8.1 kDa linker polypeptide, phycocyanin-associated, rod (70 aa).

Residues 5-63 (SRSFQVEVSGLHQNEVTNQNNYPIRSSGSVFITIPFSRFNEELQRINRLGGKIVNIQPL) enclose the CpcD-like domain.

Belongs to the phycobilisome linker protein family.

The protein resides in the cellular thylakoid membrane. Its function is as follows. Rod linker protein, associated with phycocyanin. Linker polypeptides determine the state of aggregation and the location of the disk-shaped phycobiliprotein units within the phycobilisome and modulate their spectroscopic properties in order to mediate a directed and optimal energy transfer. In Microchaete diplosiphon (Fremyella diplosiphon), this protein is Phycobilisome 8.1 kDa linker polypeptide, phycocyanin-associated, rod (cpcD3).